A 124-amino-acid chain; its full sequence is Replication restart protein PriB (124 aa).

Residues 12-112 form the SSB domain; the sequence is IDNCLILSGS…VHAEHIEFID (101 aa).

It belongs to the PriB family. In terms of assembly, homodimer. Interacts with PriA and DnaT. Component of the replication restart primosome. Primosome assembly occurs via a 'hand-off' mechanism. PriA binds to replication forks, subsequently PriB then DnaT bind; DnaT then displaces ssDNA to generate the helicase loading substrate.

In terms of biological role, involved in the restart of stalled replication forks, which reloads the replicative helicase on sites other than the origin of replication; the PriA-PriB pathway is the major replication restart pathway. During primosome assembly it facilitates complex formation between PriA and DnaT on DNA; stabilizes PriA on DNA. Stimulates the DNA unwinding activity of PriA helicase. This is Replication restart protein PriB from Actinobacillus pleuropneumoniae serotype 5b (strain L20).